Here is a 748-residue protein sequence, read N- to C-terminus: Phosphoenolpyruvate-dependent phosphotransferase system (748 aa).

Positions 1–127 (MLTRLREIVE…RRQLLGVLVV (127 aa)) constitute a GAF domain. The segment at 128-170 (QQRELRQYDESEESFLVTLATQMAAILSQSQLTALFGQYRQTR) is linker. The tract at residues 171-748 (IRALPAAPGV…GMGGLIRGGL (578 aa)) is PTS EI. The Tele-phosphohistidine intermediate role is filled by His356. Phosphoenolpyruvate is bound by residues Arg462 and Arg498. Mg(2+) is bound by residues Glu597 and Asp621. Residues 620–621 (ND) and Arg631 contribute to the phosphoenolpyruvate site. Catalysis depends on Cys668, which acts as the Proton donor.

It belongs to the PEP-utilizing enzyme family. Requires Mg(2+) as cofactor.

The protein resides in the cytoplasm. It carries out the reaction L-histidyl-[protein] + phosphoenolpyruvate = N(pros)-phospho-L-histidyl-[protein] + pyruvate. Inhibited by GDP and FAD. In terms of biological role, component of the phosphoenolpyruvate-dependent nitrogen-metabolic phosphotransferase system (nitrogen-metabolic PTS), that seems to be involved in regulating nitrogen metabolism. Enzyme I-Ntr transfers the phosphoryl group from phosphoenolpyruvate (PEP) to the phosphoryl carrier protein (NPr). Could function in the transcriptional regulation of sigma-54 dependent operons in conjunction with the NPr (PtsO) and EIIA-Ntr (PtsN) proteins. Enzyme I-Ntr is specific for NPr. The polypeptide is Phosphoenolpyruvate-dependent phosphotransferase system (ptsP) (Escherichia coli (strain K12)).